The sequence spans 293 residues: ATP synthase subunit a (293 aa).

The next 6 membrane-spanning stretches (helical) occupy residues 40 to 60 (DSLFWSGLMGLIVIFCLWLAA), 98 to 118 (FVAPLALTVFLWIILMNALDL), 151 to 171 (DLNVPMGMSLGVLLLMFYYGI), 188 to 208 (FHAHGLAALVLAPFNLLLNLI), 225 to 245 (MFAGELIFMLIALLGGAWTGF), and 264 to 284 (AIFHILIVLLQAFIFMMLTLV).

It belongs to the ATPase A chain family. F-type ATPases have 2 components, CF(1) - the catalytic core - and CF(0) - the membrane proton channel. CF(1) has five subunits: alpha(3), beta(3), gamma(1), delta(1), epsilon(1). CF(0) has three main subunits: a(1), b(2) and c(9-12). The alpha and beta chains form an alternating ring which encloses part of the gamma chain. CF(1) is attached to CF(0) by a central stalk formed by the gamma and epsilon chains, while a peripheral stalk is formed by the delta and b chains.

The protein localises to the cell inner membrane. Key component of the proton channel; it plays a direct role in the translocation of protons across the membrane. This chain is ATP synthase subunit a, found in Bordetella avium (strain 197N).